The sequence spans 144 residues: Austinoid biosynthesis clusters protein S (144 aa).

The protein belongs to the trt14 isomerase family. As to quaternary structure, homodimer.

Its pathway is secondary metabolite biosynthesis; terpenoid biosynthesis. Functionally, part of the gene cluster B that mediates the biosynthesis of the fungal meroterpenoid acetoxydehydroaustin. The first step of the pathway is the synthesis of 3,5-dimethylorsellinic acid by the polyketide synthase ausA. 3,5-dimethylorsellinic acid is then prenylated by the polyprenyl transferase ausN. Further epoxidation by the FAD-dependent monooxygenase ausM and cyclization by the probable terpene cyclase ausL lead to the formation of protoaustinoid A. Protoaustinoid A is then oxidized to spiro-lactone preaustinoid A3 by the combined action of the FAD-binding monooxygenases ausB and ausC, and the dioxygenase ausE. Acid-catalyzed keto-rearrangement and ring contraction of the tetraketide portion of preaustinoid A3 by ausJ lead to the formation of preaustinoid A4. The aldo-keto reductase ausK, with the help of ausH, is involved in the next step by transforming preaustinoid A4 into isoaustinone which is in turn hydroxylated by the P450 monooxygenase ausI to form austinolide. The cytochrome P450 monooxygenase ausG then modifies austinolide to austinol. Austinol is further acetylated to austin by the O-acetyltransferase ausP, which spontaneously changes to dehydroaustin. The cytochrome P450 monooxygenase then converts dehydroaustin is into 7-dehydrodehydroaustin. The hydroxylation catalyzed by ausR permits the second O-acetyltransferase ausQ to add an additional acetyl group to the molecule, leading to the formation of acetoxydehydroaustin. Due to genetic rearrangements of the clusters and the subsequent loss of some enzymes, the end product of the Penicillium brasilianum austinoid biosynthesis clusters is acetoxydehydroaustin. AusS is necessary for austinoids production and may play a possible function as a regulator. This chain is Austinoid biosynthesis clusters protein S, found in Penicillium brasilianum.